The sequence spans 301 residues: Large ribosomal subunit protein uL4 (301 aa).

The interval 1 to 223 (MNETKTIDVL…TQALSAQPEV (223 aa)) is large ribosomal subunit protein uL4. The segment at 49–105 (QGTHATKTRGQVSGGGKKPWRQKGTGRARQGSTRAPQWVGGGTVHGPQPRSYAQRTP) is disordered. Residues 224-301 (PETNVADQHP…KSDSEKEDAK (78 aa)) form a unknown region.

The protein belongs to the universal ribosomal protein uL4 family. Part of the 50S ribosomal subunit.

One of the primary rRNA binding proteins, this protein initially binds near the 5'-end of the 23S rRNA. It is important during the early stages of 50S assembly. It makes multiple contacts with different domains of the 23S rRNA in the assembled 50S subunit and ribosome. In terms of biological role, forms part of the polypeptide exit tunnel. The chain is Large ribosomal subunit protein uL4 from Cutibacterium acnes (strain DSM 16379 / KPA171202) (Propionibacterium acnes).